A 494-amino-acid chain; its full sequence is Aspartyl/glutamyl-tRNA(Asn/Gln) amidotransferase subunit B (494 aa).

Belongs to the GatB/GatE family. GatB subfamily. In terms of assembly, heterotrimer of A, B and C subunits.

It catalyses the reaction L-glutamyl-tRNA(Gln) + L-glutamine + ATP + H2O = L-glutaminyl-tRNA(Gln) + L-glutamate + ADP + phosphate + H(+). It carries out the reaction L-aspartyl-tRNA(Asn) + L-glutamine + ATP + H2O = L-asparaginyl-tRNA(Asn) + L-glutamate + ADP + phosphate + 2 H(+). Its function is as follows. Allows the formation of correctly charged Asn-tRNA(Asn) or Gln-tRNA(Gln) through the transamidation of misacylated Asp-tRNA(Asn) or Glu-tRNA(Gln) in organisms which lack either or both of asparaginyl-tRNA or glutaminyl-tRNA synthetases. The reaction takes place in the presence of glutamine and ATP through an activated phospho-Asp-tRNA(Asn) or phospho-Glu-tRNA(Gln). The polypeptide is Aspartyl/glutamyl-tRNA(Asn/Gln) amidotransferase subunit B (Nitrobacter winogradskyi (strain ATCC 25391 / DSM 10237 / CIP 104748 / NCIMB 11846 / Nb-255)).